Consider the following 261-residue polypeptide: Phosphonates import ATP-binding protein PhnC (261 aa).

One can recognise an ABC transporter domain in the interval 9–253; that stretch reads IQLKDVSKIY…VFDDIYNGGN (245 aa). 42–49 contacts ATP; that stretch reads GLSGAGKS.

Belongs to the ABC transporter superfamily. Phosphonates importer (TC 3.A.1.9.1) family. In terms of assembly, the complex is composed of two ATP-binding proteins (PhnC), two transmembrane proteins (PhnE) and a solute-binding protein (PhnD).

The protein resides in the cell membrane. The enzyme catalyses phosphonate(out) + ATP + H2O = phosphonate(in) + ADP + phosphate + H(+). Functionally, part of the ABC transporter complex PhnCDE involved in phosphonates import. Responsible for energy coupling to the transport system. The polypeptide is Phosphonates import ATP-binding protein PhnC (Lactobacillus gasseri (strain ATCC 33323 / DSM 20243 / BCRC 14619 / CIP 102991 / JCM 1131 / KCTC 3163 / NCIMB 11718 / NCTC 13722 / AM63)).